Consider the following 399-residue polypeptide: MRYSLDSYLISVYIRLTQRKSDYMCTNPIIPIVQYKVPVKSSLDVVDWSKFRSNFKANLFFFEKNVVRRAVSNVDEAFRFTEQLKQVSYLSTFDLDGYHQVKQFSFPLPCRKCSECLQKRSKDLAVQATMEARSHEENSVLILTYDNDHLGDNILDYDHIRVFQKRLRRYVDYHYGKKIKFLTVGEYGDKKGRMHWHMIVFGWKPKSEEQLEPYLGGKYRTDVRYRSRKLKELWKFGYVDVDEATDGNIFYVARYVQKKFVVGCDLDSSKSSSRREKKTASQALGLDYFFSYLRQFLKTKRIVLNGFRYGFPRYFKDLLRKLVSEDSEFDTEYYNALRKRLLSVCSYSMVNKYFTYLECLVEVLPVLNFHDLYQRALRYMDQSILKPHASDHDGEYNTT.

Catalysis depends on O-(5'-phospho-DNA)-tyrosine intermediate residues Y251 and Y255.

The protein belongs to the microviridae Rep protein family.

It catalyses the reaction ATP + (deoxyribonucleotide)n-3'-hydroxyl + 5'-phospho-(deoxyribonucleotide)m = (deoxyribonucleotide)n+m + AMP + diphosphate.. Plays an essential role in viral DNA replication. Binds the origin of replication and cleaves the dsDNA replicative form I (RFI) and becomes covalently bound to it via phosphotyrosine bond, generating the dsDNA replicative form II (RFII). In turn, viral DNA replication initiates at the 3'-OH of the cleavage site. After one round of rolling circle synthesis, protein ORF4 is linked to the newly synthesized ssDNA and joins the ends of the displaced strand to generate a circular single-stranded molecule ready to be packed into a virion. The chain is Replication-associated protein ORF4 from Chlamydia psittaci (Chlamydophila psittaci).